A 157-amino-acid polypeptide reads, in one-letter code: Transcriptional repressor NrdR (157 aa).

Residues 3–34 (CPFCGFADTRVIDSRLGKEGNNIRRRRECSQC) fold into a zinc finger. The ATP-cone domain occupies 49-139 (PLIIKKDARR…VYRQFKDINE (91 aa)).

This sequence belongs to the NrdR family. The cofactor is Zn(2+).

Its function is as follows. Negatively regulates transcription of bacterial ribonucleotide reductase nrd genes and operons by binding to NrdR-boxes. This Syntrophotalea carbinolica (strain DSM 2380 / NBRC 103641 / GraBd1) (Pelobacter carbinolicus) protein is Transcriptional repressor NrdR.